The chain runs to 118 residues: Cytochrome b-c1 complex subunit 7 (118 aa).

The igE-binding. Immunodominant epitope; induces specific IgE antibody production in mice. Causes degranulation of rat basophilic leukemia (RBL) cells and the release of beta-hexosaminidase from them stretch occupies residues 1–32 (MVHLTKTLRFINNPGFRKFYYGLQGYNKYGLY).

Belongs to the UQCRB/QCR7 family. Component of the ubiquinol-cytochrome c oxidoreductase (cytochrome b-c1 complex, complex III, CIII), a multisubunit enzyme composed of 3 respiratory subunits cytochrome b, cytochrome c1 and Rieske protein, 2 core protein subunits, and additional low-molecular weight protein subunits. The complex exists as an obligatory dimer and forms supercomplexes (SCs) in the inner mitochondrial membrane with cytochrome c oxidase (complex IV, CIV).

Its subcellular location is the mitochondrion inner membrane. Component of the ubiquinol-cytochrome c oxidoreductase, a multisubunit transmembrane complex that is part of the mitochondrial electron transport chain which drives oxidative phosphorylation. The respiratory chain contains 3 multisubunit complexes succinate dehydrogenase (complex II, CII), ubiquinol-cytochrome c oxidoreductase (cytochrome b-c1 complex, complex III, CIII) and cytochrome c oxidase (complex IV, CIV), that cooperate to transfer electrons derived from NADH and succinate to molecular oxygen, creating an electrochemical gradient over the inner membrane that drives transmembrane transport and the ATP synthase. The cytochrome b-c1 complex catalyzes electron transfer from ubiquinol to cytochrome c, linking this redox reaction to translocation of protons across the mitochondrial inner membrane, with protons being carried across the membrane as hydrogens on the quinol. In the process called Q cycle, 2 protons are consumed from the matrix, 4 protons are released into the intermembrane space and 2 electrons are passed to cytochrome c. The sequence is that of Cytochrome b-c1 complex subunit 7 from Dermatophagoides pteronyssinus (European house dust mite).